Here is a 724-residue protein sequence, read N- to C-terminus: Catalase-peroxidase (724 aa).

A disordered region spans residues 1–20 (MDENKTKPAGKCPVMHGGNT). The tryptophyl-tyrosyl-methioninium (Trp-Tyr) (with M-251) cross-link spans 98–225 (WHSAGTYRTA…LAAVQMGLIY (128 aa)). Catalysis depends on histidine 99, which acts as the Proton acceptor. Residues 225-251 (YVNPEGVDGNPDPLRTAQDMRVTFSRM) constitute a cross-link (tryptophyl-tyrosyl-methioninium (Tyr-Met) (with W-98)). Histidine 266 is a heme b binding site.

The protein belongs to the peroxidase family. Peroxidase/catalase subfamily. As to quaternary structure, homodimer or homotetramer. It depends on heme b as a cofactor. Formation of the three residue Trp-Tyr-Met cross-link is important for the catalase, but not the peroxidase activity of the enzyme.

It catalyses the reaction H2O2 + AH2 = A + 2 H2O. It carries out the reaction 2 H2O2 = O2 + 2 H2O. Bifunctional enzyme with both catalase and broad-spectrum peroxidase activity. The protein is Catalase-peroxidase of Pectobacterium carotovorum subsp. carotovorum (strain PC1).